The sequence spans 88 residues: Large ribosomal subunit protein bL31B (88 aa).

The protein belongs to the bacterial ribosomal protein bL31 family. Type B subfamily. Part of the 50S ribosomal subunit.

In Paraburkholderia phytofirmans (strain DSM 17436 / LMG 22146 / PsJN) (Burkholderia phytofirmans), this protein is Large ribosomal subunit protein bL31B.